Here is a 229-residue protein sequence, read N- to C-terminus: Sorting nexin-10A (229 aa).

In terms of domain architecture, PX spans 11-128; the sequence is FISVWVRDPQ…HLFLQSQLSI (118 aa). A 1,2-diacyl-sn-glycero-3-phospho-(1D-myo-inositol-3-phosphate)-binding residues include Arg-54 and Arg-95.

It belongs to the sorting nexin family.

It localises to the cytoplasm. Its subcellular location is the endosome membrane. It is found in the cytoskeleton. The protein resides in the microtubule organizing center. The protein localises to the centrosome. Functionally, probable phosphoinositide-binding protein involved in protein sorting and membrane trafficking in endosomes. May play a role in cilium biogenesis through regulation of the transport and the localization of proteins to the cilium. In Danio rerio (Zebrafish), this protein is Sorting nexin-10A (snx10a).